A 122-amino-acid polypeptide reads, in one-letter code: uncharacterized protein (122 aa).

A signal peptide spans 1-22 (MNMMRIFYIGLSGVGMMFSSMA).

This is an uncharacterized protein from Escherichia coli (strain K12).